The sequence spans 124 residues: Large ribosomal subunit protein uL18 (124 aa).

This sequence belongs to the universal ribosomal protein uL18 family. Part of the 50S ribosomal subunit; part of the 5S rRNA/L5/L18/L25 subcomplex. Contacts the 5S and 23S rRNAs.

This is one of the proteins that bind and probably mediate the attachment of the 5S RNA into the large ribosomal subunit, where it forms part of the central protuberance. The chain is Large ribosomal subunit protein uL18 from Orientia tsutsugamushi (strain Boryong) (Rickettsia tsutsugamushi).